The following is a 315-amino-acid chain: Transmembrane protein 231 (315 aa).

Residues 23–43 (AALFLLLTTALTYIPPLLVAF) form a helical membrane-spanning segment. 3 N-linked (GlcNAc...) asparagine glycosylation sites follow: Asn194, Asn199, and Asn221. A helical transmembrane segment spans residues 262–282 (FWEMIKFAWIQYVSILLIFLW).

This sequence belongs to the TMEM231 family. As to quaternary structure, part of the tectonic-like complex (also named B9 complex). Interacts with TMEM107.

It localises to the cell projection. The protein localises to the cilium membrane. In terms of biological role, transmembrane component of the tectonic-like complex, a complex localized at the transition zone of primary cilia and acting as a barrier that prevents diffusion of transmembrane proteins between the cilia and plasma membranes. Required for ciliogenesis and sonic hedgehog/SHH signaling. This Mus musculus (Mouse) protein is Transmembrane protein 231 (Tmem231).